The chain runs to 324 residues: Methenyltetrahydromethanopterin cyclohydrolase (324 aa).

The protein belongs to the MCH family.

The protein resides in the cytoplasm. The enzyme catalyses 5,10-methenyl-5,6,7,8-tetrahydromethanopterin + H2O = N(5)-formyl-5,6,7,8-tetrahydromethanopterin + H(+). The protein operates within one-carbon metabolism; formaldehyde degradation; formate from formaldehyde (H(4)MPT route): step 3/5. Functionally, catalyzes the hydrolysis of methenyl-H(4)MPT(+) to 5-formyl-H(4)MPT. This chain is Methenyltetrahydromethanopterin cyclohydrolase, found in Methylobacterium sp. (strain 4-46).